We begin with the raw amino-acid sequence, 352 residues long: Quinolinate synthase (352 aa).

Residues H48 and S69 each contribute to the iminosuccinate site. C114 is a binding site for [4Fe-4S] cluster. Residues Y140–N142 and S157 contribute to the iminosuccinate site. C201 is a [4Fe-4S] cluster binding site. Residues H227–E229 and T244 contribute to the iminosuccinate site. C298 serves as a coordination point for [4Fe-4S] cluster.

This sequence belongs to the quinolinate synthase family. Type 1 subfamily. Requires [4Fe-4S] cluster as cofactor.

Its subcellular location is the cytoplasm. It carries out the reaction iminosuccinate + dihydroxyacetone phosphate = quinolinate + phosphate + 2 H2O + H(+). It functions in the pathway cofactor biosynthesis; NAD(+) biosynthesis; quinolinate from iminoaspartate: step 1/1. In terms of biological role, catalyzes the condensation of iminoaspartate with dihydroxyacetone phosphate to form quinolinate. This Pseudomonas aeruginosa (strain UCBPP-PA14) protein is Quinolinate synthase.